The following is an 862-amino-acid chain: Linoleate 9S-lipoxygenase 1 (862 aa).

Residues 44–171 (FGAATDIVGG…SYKRDRIFFA (128 aa)) form the PLAT domain. In terms of domain architecture, Lipoxygenase spans 174 to 862 (TYLPNETPAS…FRGIPNSISI (689 aa)). Positions 225–257 (KNLARTTLGGSSDFPYPRRGRTGRKSTRKDPKC) are disordered. The span at 242–251 (RRGRTGRKST) shows a compositional bias: basic residues. H522, H527, H713, N717, and I862 together coordinate Fe cation.

Belongs to the lipoxygenase family. Monomer. The cofactor is Fe cation.

The protein localises to the cytoplasm. The enzyme catalyses (9Z,12Z)-octadecadienoate + O2 = (13S)-hydroperoxy-(9Z,11E)-octadecadienoate. It carries out the reaction (9Z,12Z,15Z)-octadecatrienoate + O2 = (13S)-hydroperoxy-(9Z,11E,15Z)-octadecatrienoate. The catalysed reaction is (9Z,12Z)-octadecadienoate + O2 = (9S)-hydroperoxy-(10E,12Z)-octadecadienoate. It participates in lipid metabolism; oxylipin biosynthesis. In terms of biological role, plant lipoxygenase may be involved in a number of diverse aspects of plant physiology including growth and development, pest resistance, and senescence or responses to wounding. It catalyzes the hydroperoxidation of lipids containing a cis,cis-1,4-pentadiene structure. The chain is Linoleate 9S-lipoxygenase 1 (LOXA) from Phaseolus vulgaris (Kidney bean).